A 255-amino-acid chain; its full sequence is Hemin import ATP-binding protein HmuV (255 aa).

Positions 2–238 constitute an ABC transporter domain; the sequence is LRAHNLHIRR…ESLKAVFGLE (237 aa). 34–41 is a binding site for ATP; it reads GPNGAGKS.

It belongs to the ABC transporter superfamily. Heme (hemin) importer (TC 3.A.1.14.5) family. In terms of assembly, the complex is composed of two ATP-binding proteins (HmuV), two transmembrane proteins (HmuU) and a solute-binding protein (HmuT).

It is found in the cell inner membrane. In terms of biological role, part of the ABC transporter complex HmuTUV involved in hemin import. Responsible for energy coupling to the transport system. In Pseudomonas fluorescens (strain Pf0-1), this protein is Hemin import ATP-binding protein HmuV.